The primary structure comprises 160 residues: SPbeta prophage-derived uncharacterized protein YokE (160 aa).

This is SPbeta prophage-derived uncharacterized protein YokE (yokE) from Bacillus subtilis (strain 168).